The sequence spans 124 residues: Large ribosomal subunit protein bL12 (124 aa).

Belongs to the bacterial ribosomal protein bL12 family. In terms of assembly, homodimer. Part of the ribosomal stalk of the 50S ribosomal subunit. Forms a multimeric L10(L12)X complex, where L10 forms an elongated spine to which 2 to 4 L12 dimers bind in a sequential fashion. Binds GTP-bound translation factors.

Functionally, forms part of the ribosomal stalk which helps the ribosome interact with GTP-bound translation factors. Is thus essential for accurate translation. In Brucella anthropi (strain ATCC 49188 / DSM 6882 / CCUG 24695 / JCM 21032 / LMG 3331 / NBRC 15819 / NCTC 12168 / Alc 37) (Ochrobactrum anthropi), this protein is Large ribosomal subunit protein bL12.